Here is a 391-residue protein sequence, read N- to C-terminus: Uroporphyrinogen decarboxylase, chloroplastic (391 aa).

Residues 71-75, Phe-90, Ser-120, Asp-121, Tyr-198, Ser-253, and His-368 contribute to the substrate site; that span reads RQAGR.

Belongs to the uroporphyrinogen decarboxylase family. In terms of assembly, homodimer.

The protein resides in the plastid. It localises to the chloroplast. It carries out the reaction uroporphyrinogen III + 4 H(+) = coproporphyrinogen III + 4 CO2. It participates in porphyrin-containing compound metabolism; protoporphyrin-IX biosynthesis; coproporphyrinogen-III from 5-aminolevulinate: step 4/4. In terms of biological role, catalyzes the decarboxylation of four acetate groups of uroporphyrinogen-III to yield coproporphyrinogen-III. The polypeptide is Uroporphyrinogen decarboxylase, chloroplastic (DCUP) (Nicotiana tabacum (Common tobacco)).